Here is a 748-residue protein sequence, read N- to C-terminus: Translation factor GUF1 homolog 2, mitochondrial (748 aa).

The N-terminal 29 residues, 1-29, are a transit peptide targeting the mitochondrion; sequence MRVGCCLLLKPLRQRLCTASISSRHIMRW. One can recognise a tr-type G domain in the interval 94 to 276; that stretch reads SHIRNVAVVA…AIIERVPPPT (183 aa). GTP contacts are provided by residues 103 to 110, 167 to 171, and 221 to 224; these read AHVDHGKT, DTPGH, and TKMD.

The protein belongs to the TRAFAC class translation factor GTPase superfamily. Classic translation factor GTPase family. LepA subfamily.

It is found in the mitochondrion inner membrane. It carries out the reaction GTP + H2O = GDP + phosphate + H(+). In terms of biological role, promotes mitochondrial protein synthesis. May act as a fidelity factor of the translation reaction, by catalyzing a one-codon backward translocation of tRNAs on improperly translocated ribosomes. Binds to mitochondrial ribosomes in a GTP-dependent manner. The polypeptide is Translation factor GUF1 homolog 2, mitochondrial (Trypanosoma cruzi (strain CL Brener)).